The chain runs to 159 residues: Phosphopantetheine adenylyltransferase (159 aa).

Residue Ser9 coordinates substrate. Residues 9 to 10 (SF) and His17 each bind ATP. Substrate contacts are provided by Lys41, Leu74, and Lys88. ATP is bound by residues 89–91 (GLR), Glu99, and 123–129 (YLHLSST).

It belongs to the bacterial CoaD family. Homohexamer. It depends on Mg(2+) as a cofactor.

The protein localises to the cytoplasm. The catalysed reaction is (R)-4'-phosphopantetheine + ATP + H(+) = 3'-dephospho-CoA + diphosphate. The protein operates within cofactor biosynthesis; coenzyme A biosynthesis; CoA from (R)-pantothenate: step 4/5. Its function is as follows. Reversibly transfers an adenylyl group from ATP to 4'-phosphopantetheine, yielding dephospho-CoA (dPCoA) and pyrophosphate. This is Phosphopantetheine adenylyltransferase from Arthrobacter sp. (strain FB24).